The following is a 305-amino-acid chain: Ornithine carbamoyltransferase (305 aa).

Carbamoyl phosphate contacts are provided by residues 47–50 (STRT), Arg98, and 125–128 (HPCQ). L-ornithine-binding positions include Asn156, Asp221, and 225–226 (SM). Carbamoyl phosphate is bound by residues 262-263 (CL) and Arg290.

The protein belongs to the aspartate/ornithine carbamoyltransferase superfamily. OTCase family.

The protein localises to the cytoplasm. The catalysed reaction is carbamoyl phosphate + L-ornithine = L-citrulline + phosphate + H(+). It participates in amino-acid biosynthesis; L-arginine biosynthesis; L-arginine from L-ornithine and carbamoyl phosphate: step 1/3. Functionally, reversibly catalyzes the transfer of the carbamoyl group from carbamoyl phosphate (CP) to the N(epsilon) atom of ornithine (ORN) to produce L-citrulline. This is Ornithine carbamoyltransferase from Methanococcus vannielii (strain ATCC 35089 / DSM 1224 / JCM 13029 / OCM 148 / SB).